Reading from the N-terminus, the 270-residue chain is uncharacterized protein (270 aa).

The signal sequence occupies residues 1-22 (MGYIKRMALYMSVFLLIIFIVG). A lipid anchor (N-palmitoyl cysteine) is attached at Cys-23. The S-diacylglycerol cysteine moiety is linked to residue Cys-23.

It belongs to the staphylococcal tandem lipoprotein family.

It is found in the cell membrane. This is an uncharacterized protein from Staphylococcus aureus (strain COL).